Consider the following 78-residue polypeptide: Acyl carrier protein (78 aa).

The Carrier domain occupies 1–75 (MIKEKILSIV…DLISVVKNST (75 aa)). S35 is subject to O-(pantetheine 4'-phosphoryl)serine.

Belongs to the acyl carrier protein (ACP) family. Post-translationally, 4'-phosphopantetheine is transferred from CoA to a specific serine of apo-ACP by AcpS. This modification is essential for activity because fatty acids are bound in thioester linkage to the sulfhydryl of the prosthetic group.

The protein resides in the cytoplasm. It functions in the pathway lipid metabolism; fatty acid biosynthesis. Functionally, carrier of the growing fatty acid chain in fatty acid biosynthesis. In Shigella flexneri, this protein is Acyl carrier protein (acpP).